The sequence spans 177 residues: ATP synthase subunit delta (177 aa).

Belongs to the ATPase delta chain family. F-type ATPases have 2 components, F(1) - the catalytic core - and F(0) - the membrane proton channel. F(1) has five subunits: alpha(3), beta(3), gamma(1), delta(1), epsilon(1). F(0) has three main subunits: a(1), b(2) and c(10-14). The alpha and beta chains form an alternating ring which encloses part of the gamma chain. F(1) is attached to F(0) by a central stalk formed by the gamma and epsilon chains, while a peripheral stalk is formed by the delta and b chains.

The protein localises to the cell membrane. In terms of biological role, f(1)F(0) ATP synthase produces ATP from ADP in the presence of a proton or sodium gradient. F-type ATPases consist of two structural domains, F(1) containing the extramembraneous catalytic core and F(0) containing the membrane proton channel, linked together by a central stalk and a peripheral stalk. During catalysis, ATP synthesis in the catalytic domain of F(1) is coupled via a rotary mechanism of the central stalk subunits to proton translocation. Functionally, this protein is part of the stalk that links CF(0) to CF(1). It either transmits conformational changes from CF(0) to CF(1) or is implicated in proton conduction. The chain is ATP synthase subunit delta from Macrococcus caseolyticus (strain JCSC5402) (Macrococcoides caseolyticum).